The chain runs to 206 residues: Large ribosomal subunit protein uL4 (206 aa).

Residues 63 to 97 (MYKQKGTGRARHHSARAPQFRGGGKAHGPVVRSHE) are disordered. Positions 64 to 77 (YKQKGTGRARHHSA) are enriched in basic residues.

This sequence belongs to the universal ribosomal protein uL4 family. Part of the 50S ribosomal subunit.

Functionally, one of the primary rRNA binding proteins, this protein initially binds near the 5'-end of the 23S rRNA. It is important during the early stages of 50S assembly. It makes multiple contacts with different domains of the 23S rRNA in the assembled 50S subunit and ribosome. In terms of biological role, forms part of the polypeptide exit tunnel. The sequence is that of Large ribosomal subunit protein uL4 from Rhizobium leguminosarum bv. trifolii (strain WSM2304).